Consider the following 787-residue polypeptide: MGIELLCLFFLFLGRNDHVQGGCAMGGAETCEDCLLIGPQCAWCSQENFTHLSGVGERCDTPANLLAKGCQLTFIENPVSQVEILTNKPLSIGRQKNSSNIVQISPQSLALKLRPGLEQTLQVQVRQTEDYPVDLYYLMDLSASMDDDLNTIKELGSLLSKEMSKLTSNFRLGFGSFVEKPISPFMKTTPEEIANPCSSIPYFCLPTFGFKHILPLTNDAERFNEIVKNQKISANIDTPEGGFDAIMQAAVCKEKIGWRNDSLHLLVFVSDADSHFGMDSKLAGIVIPNDGLCHLDSKNEYSMSTILEYPTIGQLIDKLVQNNVLLIFAVTQEQVHLYENYAKLIPGATVGVLQKDSGNILQLIISAYEELRSEVELEVLGDTEGLNLSFTAICNSGVPFPHQKKCSHMKVGDTASFNVTVSLPNCERRSRHVILKPVGLGDALEILVSPECSCDCQKEVEVNSSKCSNGNGSFQCGVCACNPGHVGHHCECGEDTLSTESCKEAPELPSCSGRGDCYCGQCVCHLSPYGNIYGPYCQCDNFSCVRHKGLLCGDNGDCDCGECVCRSGWTGEYCNCTTSTDPCVSEDGILCSGRGDCVCGKCICTNPGASGPACERCPTCSDPCNSKRNCIECYLSADGQAQEECVDKCKLAGATINEEEDFSKDSSVSCSLQGENECLITFLLTTDNEGKTVIHSIEKDCPKPPNIPMIMLGVSLAILLIGVALLCIWKLLVSFHDRKEVAKFEAERSKAKWQTGTNPLYRGSTSTFKNVTYKHKEKQKVDLSTDG.

The N-terminal stretch at 1–21 (MGIELLCLFFLFLGRNDHVQG) is a signal peptide. The region spanning 22–71 (GCAMGGAETCEDCLLIGPQCAWCSQENFTHLSGVGERCDTPANLLAKGCQ) is the PSI domain. Residues 22–708 (GCAMGGAETC…KDCPKPPNIP (687 aa)) lie on the Extracellular side of the membrane. 19 cysteine pairs are disulfide-bonded: C23–C41, C31–C454, C34–C59, C44–C70, C197–C204, C252–C293, C394–C406, C426–C452, C456–C476, C467–C479, C481–C490, C492–C519, C502–C517, C511–C522, C524–C537, C539–C560, C544–C558, C552–C563, and C565–C574. N-linked (GlcNAc...) asparagine glycans are attached at residues N48 and N97. One can recognise a VWFA domain in the interval 131-371 (YPVDLYYLMD…QLIISAYEEL (241 aa)). Mg(2+) contacts are provided by D140, S142, and S144. Ca(2+) contacts are provided by S144, D147, D148, and E179. Ca(2+)-binding residues include N235, D237, P239, and E240. Residue E240 coordinates Mg(2+). A glycan (N-linked (GlcNAc...) asparagine) is linked at N260. The Ca(2+) site is built by D271 and K355. The N-linked (GlcNAc...) asparagine glycan is linked to N387. N-linked (GlcNAc...) asparagine glycosylation occurs at N418. I-EGF domains lie at 456–491 (CQKEVEVNSSKCSNGNGSFQCGVCACNPGHVGHHCE), 492–538 (CGED…PYCQ), 539–575 (CDNFSCVRHKGLLCGDNGDCDCGECVCRSGWTGEYCN), and 576–615 (CTTSTDPCVSEDGILCSGRGDCVCGKCICTNPGASGPACE). 2 N-linked (GlcNAc...) asparagine glycosylation sites follow: N463 and N471. N541 carries N-linked (GlcNAc...) asparagine glycosylation. The N-linked (GlcNAc...) asparagine glycan is linked to N575. 9 disulfides stabilise this stretch: C576–C599, C583–C597, C591–C602, C604–C614, C617–C620, C624–C670, C630–C649, C633–C645, and C678–C701. Residues 709-729 (MIMLGVSLAILLIGVALLCIW) traverse the membrane as a helical segment. An interaction with HAX1 region spans residues 730–757 (KLLVSFHDRKEVAKFEAERSKAKWQTGT). The Cytoplasmic portion of the chain corresponds to 730-787 (KLLVSFHDRKEVAKFEAERSKAKWQTGTNPLYRGSTSTFKNVTYKHKEKQKVDLSTDG).

Belongs to the integrin beta chain family. Heterodimer of an alpha and a beta subunit. Interacts with FLNB. Interacts with HAX1. ITGAV:ITGB6 interacts with FBN1. ITGAV:ITGB6 interacts with TGFB1.

The protein resides in the cell membrane. It localises to the cell junction. It is found in the focal adhesion. In terms of biological role, integrin alpha-V:beta-6 (ITGAV:ITGB6) is a receptor for fibronectin and cytotactin. It recognizes the sequence R-G-D in its ligands. ITGAV:ITGB6 acts as a receptor for fibrillin-1 (FBN1) and mediates R-G-D-dependent cell adhesion to FBN1. Integrin alpha-V:beta-6 (ITGAV:ITGB6) mediates R-G-D-dependent release of transforming growth factor beta-1 (TGF-beta-1) from regulatory Latency-associated peptide (LAP), thereby playing a key role in TGF-beta-1 activation. The sequence is that of Integrin beta-6 (ITGB6) from Ovis aries (Sheep).